A 156-amino-acid chain; its full sequence is Small ribosomal subunit protein uS7 (156 aa).

The protein belongs to the universal ribosomal protein uS7 family. As to quaternary structure, part of the 30S ribosomal subunit. Contacts proteins S9 and S11.

Its function is as follows. One of the primary rRNA binding proteins, it binds directly to 16S rRNA where it nucleates assembly of the head domain of the 30S subunit. Is located at the subunit interface close to the decoding center, probably blocks exit of the E-site tRNA. The polypeptide is Small ribosomal subunit protein uS7 (Coprothermobacter proteolyticus (strain ATCC 35245 / DSM 5265 / OCM 4 / BT)).